The following is a 198-amino-acid chain: Nucleoid occlusion factor SlmA (198 aa).

The HTH tetR-type domain occupies 10 to 70 (NRREEILQSL…SLIEFIEDSL (61 aa)). Residues 33 to 52 (TTAKLAASVGVSEAALYRHF) constitute a DNA-binding region (H-T-H motif). The stretch at 117 to 144 (EQDRLQGRINQLFERIEAQLRQVLREKR) forms a coiled coil.

It belongs to the nucleoid occlusion factor SlmA family. Homodimer. Interacts with FtsZ.

It is found in the cytoplasm. It localises to the nucleoid. In terms of biological role, required for nucleoid occlusion (NO) phenomenon, which prevents Z-ring formation and cell division over the nucleoid. Acts as a DNA-associated cell division inhibitor that binds simultaneously chromosomal DNA and FtsZ, and disrupts the assembly of FtsZ polymers. SlmA-DNA-binding sequences (SBS) are dispersed on non-Ter regions of the chromosome, preventing FtsZ polymerization at these regions. The chain is Nucleoid occlusion factor SlmA from Citrobacter koseri (strain ATCC BAA-895 / CDC 4225-83 / SGSC4696).